The following is a 675-amino-acid chain: Methionine--tRNA ligase (675 aa).

Residues 15–25 (PYANGSIHLGH) carry the 'HIGH' region motif. Zn(2+)-binding residues include Cys146, Cys149, Cys159, and Cys162. Residues 332–336 (KMSKS) carry the 'KMSKS' region motif. An ATP-binding site is contributed by Lys335. A tRNA-binding domain is found at 573-675 (DFAKVDMRIA…SGAQPGMQVK (103 aa)).

It belongs to the class-I aminoacyl-tRNA synthetase family. MetG type 1 subfamily. In terms of assembly, homodimer. Zn(2+) is required as a cofactor.

The protein resides in the cytoplasm. It catalyses the reaction tRNA(Met) + L-methionine + ATP = L-methionyl-tRNA(Met) + AMP + diphosphate. Functionally, is required not only for elongation of protein synthesis but also for the initiation of all mRNA translation through initiator tRNA(fMet) aminoacylation. This Yersinia pseudotuberculosis serotype O:1b (strain IP 31758) protein is Methionine--tRNA ligase.